Reading from the N-terminus, the 291-residue chain is S-methyl-5'-thioadenosine phosphorylase (291 aa).

Phosphate is bound by residues Ser12, 54 to 55 (RH), and 87 to 88 (SA). Met185 is a substrate binding site. Thr186 contacts phosphate. A substrate-binding site is contributed by 209–211 (DFD).

This sequence belongs to the PNP/MTAP phosphorylase family. MTAP subfamily. In terms of assembly, homohexamer. Dimer of a homotrimer.

It carries out the reaction S-methyl-5'-thioadenosine + phosphate = 5-(methylsulfanyl)-alpha-D-ribose 1-phosphate + adenine. It participates in amino-acid biosynthesis; L-methionine biosynthesis via salvage pathway; S-methyl-5-thio-alpha-D-ribose 1-phosphate from S-methyl-5'-thioadenosine (phosphorylase route): step 1/1. In terms of biological role, catalyzes the reversible phosphorylation of S-methyl-5'-thioadenosine (MTA) to adenine and 5-methylthioribose-1-phosphate. Involved in the breakdown of MTA, a major by-product of polyamine biosynthesis. Responsible for the first step in the methionine salvage pathway after MTA has been generated from S-adenosylmethionine. Has broad substrate specificity with 6-aminopurine nucleosides as preferred substrates. In Bradyrhizobium diazoefficiens (strain JCM 10833 / BCRC 13528 / IAM 13628 / NBRC 14792 / USDA 110), this protein is S-methyl-5'-thioadenosine phosphorylase.